The chain runs to 236 residues: 7-cyano-7-deazaguanine synthase (236 aa).

An ATP-binding site is contributed by 13–23; that stretch reads FSGGQDSTVCL. Positions 200, 215, 218, and 221 each coordinate Zn(2+).

It belongs to the QueC family. Zn(2+) serves as cofactor.

It carries out the reaction 7-carboxy-7-deazaguanine + NH4(+) + ATP = 7-cyano-7-deazaguanine + ADP + phosphate + H2O + H(+). Its pathway is purine metabolism; 7-cyano-7-deazaguanine biosynthesis. Its function is as follows. Catalyzes the ATP-dependent conversion of 7-carboxy-7-deazaguanine (CDG) to 7-cyano-7-deazaguanine (preQ(0)). The protein is 7-cyano-7-deazaguanine synthase of Parvibaculum lavamentivorans (strain DS-1 / DSM 13023 / NCIMB 13966).